Reading from the N-terminus, the 501-residue chain is Tetrachloroethene reductive dehalogenase (501 aa).

The tat-type signal signal peptide spans 1–37; that stretch reads MEKKKKPELSRRDFGKLIIGGGAAATIAPFGVPGANA. Corrinoid-binding positions include Ala74, Tyr207, 309–314, 329–332, and 341–343; these read NGVGQS, MGAC, and VRL. A 4Fe-4S ferredoxin-type 1 domain is found at 356 to 386; sequence KPIDFGVTEFCETCKKCARECPSKAITEGPR. [4Fe-4S] cluster contacts are provided by Cys366, Cys369, Cys372, and Cys376. A corrinoid-binding site is contributed by 394 to 401; sequence HNQSGKLQ. Cys409 is a [4Fe-4S] cluster binding site. Corrinoid is bound at residue Tyr419. Cys420, Cys423, and Cys427 together coordinate [4Fe-4S] cluster. The 4Fe-4S ferredoxin-type 2 domain occupies 420 to 439; it reads CGVCVAVCPFTKGNIWIHDG.

Belongs to the PceA family. In terms of assembly, monomer. [4Fe-4S] cluster is required as a cofactor. It depends on corrinoid as a cofactor. Predicted to be exported by the Tat system. The position of the signal peptide cleavage has not been experimentally proven.

It is found in the cytoplasm. The protein localises to the cell inner membrane. The catalysed reaction is trichloroethene + chloride + A + H(+) = tetrachloroethene + AH2. It carries out the reaction trichloroethene + AH2 = (Z)-1,2-dichloroethene + chloride + A + H(+). Both the processed and unprocessed enzymes are catalytically active. PCE-dependent growth and PceA activity are inhibited in the presence of high concentrations of 5,6-dimethylbenzimidazole (DMB), probably due to the formation a DMB-containing nor-B12 cofactor. Dechlorination of PCE is stimulated by ammonium ions. Activity is inhibited by chlorinated methanes. In terms of biological role, catalyzes the reductive dechlorination of tetrachloroethene (PCE) to trichloroethene (TCE) and of trichloroethene to cis-1,2-dichloroethene (DCE). In addition, trans-1,3-dichloropropene, 1,1,3-trichloropropene and 2,3-dichloropropene are reduced to a mixture of mono-chloropropenes, 1,1-dichloropropene, and 2-chloropropene, respectively. Is also able to convert brominated phenols such as 4-bromophenol (4-BP), 2,4-dibromophenol (2,4-DBP) and 2,4,6-tribromophenol (2,4,6-TBP). Utilizes formate or pyruvate as electron donors. Titanium(III) citrate could also serve as electron donor. Reduced methyl viologen can act as the artificial electron donor. The polypeptide is Tetrachloroethene reductive dehalogenase (Sulfurospirillum multivorans (Dehalospirillum multivorans)).